The following is a 371-amino-acid chain: Cytochrome b (371 aa).

The next 4 membrane-spanning stretches (helical) occupy residues 25–45, 69–90, 105–125, and 170–190; these read FGSMLLTCLALQTLTGFFLAV, WMMQNLHAIGASMFFICIYIHI, WMSGITLLIILMATAFFGYVL, and FFALHFILPFAIISLSSLHVI. The heme b site is built by H75 and H89. Residues H174 and H188 each contribute to the heme b site. Residue H193 coordinates a ubiquinone. 4 helical membrane-spanning segments follow: residues 218-238, 280-300, 312-332, and 339-358; these read YKDLLLLTLMILSLLIIVSFF, LGGALALVMSIMILLTIPFTH, LSQLMFWTLVSTFITITWAAT, and FIIISQVTATLYFTFFISTP.

The protein belongs to the cytochrome b family. As to quaternary structure, the cytochrome bc1 complex contains 3 respiratory subunits (MT-CYB, CYC1 and UQCRFS1), 2 core proteins (UQCRC1 and UQCRC2) and probably 6 low-molecular weight proteins. Heme b serves as cofactor.

It localises to the mitochondrion inner membrane. In terms of biological role, component of the ubiquinol-cytochrome c reductase complex (complex III or cytochrome b-c1 complex) that is part of the mitochondrial respiratory chain. The b-c1 complex mediates electron transfer from ubiquinol to cytochrome c. Contributes to the generation of a proton gradient across the mitochondrial membrane that is then used for ATP synthesis. The sequence is that of Cytochrome b (MT-CYB) from Python sebae (African rock python).